We begin with the raw amino-acid sequence, 434 residues long: Serine/threonine transporter SstT (434 aa).

The next 9 helical transmembrane spans lie at 14 to 34, 41 to 61, 72 to 92, 135 to 155, 172 to 192, 210 to 230, 282 to 302, 316 to 336, and 351 to 371; these read IVIG…WSFI, FVGA…MSAI, FGTV…AAVA, ALVE…GSGL, TVSA…VGLL, LLML…PFMV, ISIP…VSIM, IFLA…VSGI, and FGIS…IGVV. The disordered stretch occupies residues 413 to 434; that stretch reads GKGTAEVVTPEKTNEAEESEQV.

It belongs to the dicarboxylate/amino acid:cation symporter (DAACS) (TC 2.A.23) family.

The protein resides in the cell membrane. It carries out the reaction L-serine(in) + Na(+)(in) = L-serine(out) + Na(+)(out). The enzyme catalyses L-threonine(in) + Na(+)(in) = L-threonine(out) + Na(+)(out). Involved in the import of serine and threonine into the cell, with the concomitant import of sodium (symport system). This chain is Serine/threonine transporter SstT, found in Lacticaseibacillus casei (strain BL23) (Lactobacillus casei).